The chain runs to 268 residues: MSRLQTRFAQLKQDNRAALVTFVTAGDPDYDASLEILKGLPAAGADVIELGMPFTDPMADGPAIQLANIRALQGGQTLAKTLRMVREFRAGDSDTPLVLMGYFNPIHHYGVERFVTEAKEAGVDGLIVVDLPPEHNEDLCHPAQAAGIDFIRLTTPTTGDERLPTVLEGSSGFVYYVSVAGVTGANAATLEHVEEAVARLRRHTDLPIGIGFGIRSAEHAAAVARLADGVVVGSALIERIAKAGDTARAVKDVLALCGELAEGVRNAR.

Active-site proton acceptor residues include glutamate 49 and aspartate 60.

This sequence belongs to the TrpA family. In terms of assembly, tetramer of two alpha and two beta chains.

The enzyme catalyses (1S,2R)-1-C-(indol-3-yl)glycerol 3-phosphate + L-serine = D-glyceraldehyde 3-phosphate + L-tryptophan + H2O. It functions in the pathway amino-acid biosynthesis; L-tryptophan biosynthesis; L-tryptophan from chorismate: step 5/5. In terms of biological role, the alpha subunit is responsible for the aldol cleavage of indoleglycerol phosphate to indole and glyceraldehyde 3-phosphate. The polypeptide is Tryptophan synthase alpha chain (Pseudomonas paraeruginosa (strain DSM 24068 / PA7) (Pseudomonas aeruginosa (strain PA7))).